The chain runs to 151 residues: SsrA-binding protein (151 aa).

Belongs to the SmpB family.

It is found in the cytoplasm. Its function is as follows. Required for rescue of stalled ribosomes mediated by trans-translation. Binds to transfer-messenger RNA (tmRNA), required for stable association of tmRNA with ribosomes. tmRNA and SmpB together mimic tRNA shape, replacing the anticodon stem-loop with SmpB. tmRNA is encoded by the ssrA gene; the 2 termini fold to resemble tRNA(Ala) and it encodes a 'tag peptide', a short internal open reading frame. During trans-translation Ala-aminoacylated tmRNA acts like a tRNA, entering the A-site of stalled ribosomes, displacing the stalled mRNA. The ribosome then switches to translate the ORF on the tmRNA; the nascent peptide is terminated with the 'tag peptide' encoded by the tmRNA and targeted for degradation. The ribosome is freed to recommence translation, which seems to be the essential function of trans-translation. This chain is SsrA-binding protein, found in Geotalea uraniireducens (strain Rf4) (Geobacter uraniireducens).